The sequence spans 570 residues: Set1/Ash2 histone methyltransferase complex subunit ash-2 (570 aa).

Residues 19–76 (TTVCYCDGKRELGSVEVVCSTCLKWFHGRCLKEFHELNSNGVPFMICYTFTCKQCRPT) form a PHD-type zinc finger. The segment at 201-242 (NREPRHIELPPIEGPKTRGASKRRHAEAPVTGKKQKLAADYS) is disordered. One can recognise a B30.2/SPRY domain in the interval 270–468 (PNVPEDPAWN…TLVEMPGSYI (199 aa)).

As to quaternary structure, component of the SET2 complex (also known as the SET1/COMPASS complex), which contains at least set-2, swd-2.1, cfp-1, rbbp-5, wdr-5.1, dpy-30 and ash-2. Within the complex, interacts with cfp-1 and wdr-5.1. Expressed in somatic and germline tissues (at protein level).

It localises to the nucleus. In terms of biological role, component of the set-2/ash-2 histone methyltransferase (HMT) complex. Required for the di- and trimethylation at 'Lys-4' of histone H3, a mark associated with epigenetic transcriptional activation. Implicated in the epigenetic inheritance of lifespan over several generations. Functions as a transcriptional regulator. Acts in the germline to limit the longevity of the soma, probably by regulating a lipid metabolism pathway that signals from the germline to the intestine, thereby preventing accumulation of mono-unsaturated fatty acids. The sequence is that of Set1/Ash2 histone methyltransferase complex subunit ash-2 from Caenorhabditis elegans.